A 226-amino-acid chain; its full sequence is Cytidylate kinase (226 aa).

10-18 (GPASSGKST) provides a ligand contact to ATP.

It belongs to the cytidylate kinase family. Type 1 subfamily.

The protein resides in the cytoplasm. It carries out the reaction CMP + ATP = CDP + ADP. The enzyme catalyses dCMP + ATP = dCDP + ADP. The sequence is that of Cytidylate kinase from Enterococcus faecalis (strain ATCC 700802 / V583).